A 221-amino-acid polypeptide reads, in one-letter code: 7-cyano-7-deazaguanine synthase (221 aa).

8–18 (LSGGMDSAAVI) provides a ligand contact to ATP. 4 residues coordinate Zn(2+): Cys-186, Cys-196, Cys-199, and Cys-202.

Belongs to the QueC family. Zn(2+) serves as cofactor.

The enzyme catalyses 7-carboxy-7-deazaguanine + NH4(+) + ATP = 7-cyano-7-deazaguanine + ADP + phosphate + H2O + H(+). The protein operates within purine metabolism; 7-cyano-7-deazaguanine biosynthesis. In terms of biological role, catalyzes the ATP-dependent conversion of 7-carboxy-7-deazaguanine (CDG) to 7-cyano-7-deazaguanine (preQ(0)). The polypeptide is 7-cyano-7-deazaguanine synthase (Stenotrophomonas maltophilia (strain R551-3)).